Here is a 365-residue protein sequence, read N- to C-terminus: Protein Tob1 (365 aa).

The short motif at arginine 22–lysine 39 is the Bipartite nuclear localization signal element. Residues valine 82–valine 92 are important for nuclear localization. Residues aspartate 144–serine 160 are compositionally biased toward low complexity. Residues aspartate 144–serine 171 are disordered. Residues alanine 161–lysine 220 form a required for interaction with CPEB3 region. Threonine 204 carries the phosphothreonine modification. Positions methionine 228–leucine 236 match the Nuclear export signal motif. A disordered region spans residues glycine 233–leucine 287. The span at glutamine 243–glutamine 261 shows a compositional bias: pro residues. The segment covering glutamine 262–glutamine 283 has biased composition (low complexity).

The protein belongs to the BTG family. In terms of assembly, interacts with ERBB2. Interacts with CNOT7. Interacts with CPEB3 (via C-terminal RNA-binding region); recruits CNOT7 to CPEB3 to form a ternary complex required for mRNA deadenylation and decay. Interacts with CNOT8. Interacts with CPEB4. Phosphorylated on Ser and Thr residues.

The protein localises to the cytoplasm. It is found in the nucleus. Functionally, anti-proliferative protein; the function is mediated by association with deadenylase subunits of the CCR4-NOT complex. Mediates CPEB3-accelerated mRNA deadenylation by binding to CPEB3 and recruiting CNOT7 which leads to target mRNA deadenylation and decay. This is Protein Tob1 (Tob1) from Rattus norvegicus (Rat).